We begin with the raw amino-acid sequence, 351 residues long: DNA polymerase IV (351 aa).

The region spanning 4–185 (IIHVDMDCFF…LPLAKIPGVG (182 aa)) is the UmuC domain. 2 residues coordinate Mg(2+): Asp8 and Asp103. Glu104 is an active-site residue.

This sequence belongs to the DNA polymerase type-Y family. Monomer. It depends on Mg(2+) as a cofactor.

The protein localises to the cytoplasm. The catalysed reaction is DNA(n) + a 2'-deoxyribonucleoside 5'-triphosphate = DNA(n+1) + diphosphate. In terms of biological role, poorly processive, error-prone DNA polymerase involved in untargeted mutagenesis. Copies undamaged DNA at stalled replication forks, which arise in vivo from mismatched or misaligned primer ends. These misaligned primers can be extended by PolIV. Exhibits no 3'-5' exonuclease (proofreading) activity. May be involved in translesional synthesis, in conjunction with the beta clamp from PolIII. The protein is DNA polymerase IV of Escherichia coli (strain ATCC 8739 / DSM 1576 / NBRC 3972 / NCIMB 8545 / WDCM 00012 / Crooks).